A 221-amino-acid polypeptide reads, in one-letter code: Endo-1,4-beta-xylanase A (221 aa).

Residues 1–16 form the signal peptide; that stretch reads MKFFATIAALVVGAVA. The GH11 domain maps to 29-221; sequence PMLIERAGPG…GTGSASVTVS (193 aa). The Nucleophile role is filled by E114. The active-site Proton donor is E208.

This sequence belongs to the glycosyl hydrolase 11 (cellulase G) family.

The protein localises to the secreted. The catalysed reaction is Endohydrolysis of (1-&gt;4)-beta-D-xylosidic linkages in xylans.. It participates in glycan degradation; xylan degradation. Functionally, endo-1,4-beta-xylanase involved in the hydrolysis of xylan, a major structural heterogeneous polysaccharide found in plant biomass representing the second most abundant polysaccharide in the biosphere, after cellulose. The protein is Endo-1,4-beta-xylanase A (xynA) of Aureobasidium pullulans (Black yeast).